The following is a 333-amino-acid chain: Anthranilate phosphoribosyltransferase (333 aa).

Residues G80, 83–84 (GD), T88, 90–93 (NLST), 108–116 (KHGNRSASG), and S120 each bind 5-phospho-alpha-D-ribose 1-diphosphate. Residue G80 participates in anthranilate binding. Mg(2+) is bound at residue S92. Anthranilate is bound at residue N111. R166 serves as a coordination point for anthranilate. 2 residues coordinate Mg(2+): D224 and E225.

It belongs to the anthranilate phosphoribosyltransferase family. Homodimer. It depends on Mg(2+) as a cofactor.

It carries out the reaction N-(5-phospho-beta-D-ribosyl)anthranilate + diphosphate = 5-phospho-alpha-D-ribose 1-diphosphate + anthranilate. It participates in amino-acid biosynthesis; L-tryptophan biosynthesis; L-tryptophan from chorismate: step 2/5. Functionally, catalyzes the transfer of the phosphoribosyl group of 5-phosphorylribose-1-pyrophosphate (PRPP) to anthranilate to yield N-(5'-phosphoribosyl)-anthranilate (PRA). The sequence is that of Anthranilate phosphoribosyltransferase from Pyrobaculum aerophilum (strain ATCC 51768 / DSM 7523 / JCM 9630 / CIP 104966 / NBRC 100827 / IM2).